The primary structure comprises 199 residues: MKLTKISEAKLPTSFGEFLMIVFEESKTDKNHIALVYGDIKDTNNSVLSRIHSECLTGDALFSIRCDCGFQLKSALMEIVKEGSGILIYHRQEGRNIGLSNKIRAYALQDIGLDTVEANHHLGFSADERDFSVCIDIFNTLNIKKIKLLTNNPSKVTVLNNAGIQITERISLIVGRNAKNSKYLNTKAHKMGHFLPIEY.

50–54 contributes to the GTP binding site; it reads RIHSE. Positions 55, 66, and 68 each coordinate Zn(2+). Residues glutamine 71, 93 to 95, and threonine 115 contribute to the GTP site; that span reads EGR. Aspartate 127 serves as the catalytic Proton acceptor. The active-site Nucleophile is arginine 129. Residues threonine 150 and lysine 155 each coordinate GTP.

The protein belongs to the GTP cyclohydrolase II family. In terms of assembly, homodimer. Requires Zn(2+) as cofactor.

The catalysed reaction is GTP + 4 H2O = 2,5-diamino-6-hydroxy-4-(5-phosphoribosylamino)-pyrimidine + formate + 2 phosphate + 3 H(+). It functions in the pathway cofactor biosynthesis; riboflavin biosynthesis; 5-amino-6-(D-ribitylamino)uracil from GTP: step 1/4. Its function is as follows. Catalyzes the conversion of GTP to 2,5-diamino-6-ribosylamino-4(3H)-pyrimidinone 5'-phosphate (DARP), formate and pyrophosphate. In Buchnera aphidicola subsp. Baizongia pistaciae (strain Bp), this protein is GTP cyclohydrolase-2.